The following is a 2698-amino-acid chain: Chromodomain-helicase-DNA-binding protein 6 (2698 aa).

Basic and acidic residues-rich tracts occupy residues 1–12 (MKMKIQKKEKQL), 100–115 (EPGE…DREP), and 122–171 (EPKE…KRSC). The interval 1 to 243 (MKMKIQKKEK…KRRSGRQVKR (243 aa)) is disordered. Residues 1-746 (MKMKIQKKEK…MMELRKCCNH (746 aa)) form a required for DNA-dependent ATPase activity region. The span at 213–224 (QSLPNPSLQSPE) shows a compositional bias: low complexity. 2 consecutive Chromo domains span residues 291-342 (NIIE…KDPR) and 374-438 (IEID…KPVE). A Helicase ATP-binding domain is found at 472 to 646 (LFNWYNRKNC…FSLLNFLEPS (175 aa)). 485–492 (DEMGLGKT) provides a ligand contact to ATP. The DEAH box motif lies at 597–600 (DEAH). A Helicase C-terminal domain is found at 786–955 (LIDKLLPKLI…LSKMEVEDLL (170 aa)). Positions 1318-1370 (SLSAEQGVTDGTSDIPERGNIDKEDSAEDKVDGLQKQTASPSDGSDGIFGEKK) are disordered. Residues 1320–1329 (SAEQGVTDGT) show a composition bias toward polar residues. Basic and acidic residues predominate over residues 1332-1350 (IPERGNIDKEDSAEDKVDG). The Myb-like domain occupies 1435-1489 (RWTRREQADFYRTVSSFGVVYDQEKEAFDWTQFRAISRLDKKSDENLEHYFHSFV). The span at 1707-1730 (EPRSFQEAPSTNMQSRKKTVTVSA) shows a compositional bias: polar residues. The disordered stretch occupies residues 1707-1731 (EPRSFQEAPSTNMQSRKKTVTVSAS). Serine 1852 carries the post-translational modification Phosphoserine. 6 disordered regions span residues 1935-2046 (GLGS…ASGI), 2111-2137 (LPTP…HSFS), 2308-2337 (TTLN…QAEK), 2359-2387 (PGFG…IGSL), 2538-2587 (ASLA…PTIT), and 2626-2698 (QGRH…DDTN). Composition is skewed to basic and acidic residues over residues 1943–1955 (GEKP…DPYR), 1975–1991 (FKLK…ESSE), and 2004–2024 (SEPK…KDGA). Composition is skewed to low complexity over residues 2117–2127 (SSSAGSRSSLS) and 2315–2336 (PEGP…SQAE). Residues 2538 to 2550 (ASLASTKSGASAT) show a composition bias toward low complexity. Positions 2552 to 2573 (KTTEDELSGRDVKADSLVEDKP) are enriched in basic and acidic residues. 2 stretches are compositionally biased toward polar residues: residues 2578–2587 (FSDQSEPTIT) and 2664–2675 (SDQNCTESSVTV). Basic and acidic residues predominate over residues 2677–2698 (PEREHVAQAREEGLKDSNDDTN).

The protein belongs to the SNF2/RAD54 helicase family. In terms of assembly, interacts with NFE2L2; involved in activation of the transcription. May interact with PPARA. As to expression, widely expressed.

It is found in the nucleus. The protein localises to the nucleoplasm. The enzyme catalyses ATP + H2O = ADP + phosphate + H(+). In terms of biological role, ATP-dependent chromatin-remodeling factor. Regulates transcription by disrupting nucleosomes in a largely non-sliding manner which strongly increases the accessibility of chromatin. Activates transcription of specific genes in response to oxidative stress through interaction with NFE2L2. The chain is Chromodomain-helicase-DNA-binding protein 6 (Chd6) from Rattus norvegicus (Rat).